The primary structure comprises 524 residues: Thioredoxin reductase 2, mitochondrial (524 aa).

The N-terminal 36 residues, Met-1–Gly-36, are a transit peptide targeting the mitochondrion. Residue Asp-41–Tyr-70 participates in FAD binding. Residues Cys-86 and Cys-91 are joined by a disulfide bond. 2 positions are modified to N6-succinyllysine: Lys-175 and Lys-329. The active-site Proton acceptor is His-497. Residues Cys-522 to Sec-523 constitute a cross-link (cysteinyl-selenocysteine (Cys-Sec)). A non-standard amino acid (selenocysteine) is located at residue Sec-523.

This sequence belongs to the class-I pyridine nucleotide-disulfide oxidoreductase family. Homodimer. The cofactor is FAD. As to expression, highly expressed in the prostate, ovary, liver, testis, uterus, colon and small intestine. Intermediate levels in brain, skeletal muscle, heart and spleen. Low levels in placenta, pancreas, thymus and peripheral blood leukocytes. According to PubMed:10608886, high levels in kidney, whereas according to PubMed:9923614, levels are low. High expression is observed in the adrenal cortex.

The protein resides in the mitochondrion. It catalyses the reaction [thioredoxin]-dithiol + NADP(+) = [thioredoxin]-disulfide + NADPH + H(+). In terms of biological role, involved in the control of reactive oxygen species levels and the regulation of mitochondrial redox homeostasis. Maintains thioredoxin in a reduced state. May play a role in redox-regulated cell signaling. The sequence is that of Thioredoxin reductase 2, mitochondrial from Homo sapiens (Human).